The chain runs to 837 residues: Protein translocase subunit SecA 1 (837 aa).

ATP-binding positions include Q85, 103-107, and D492; that span reads GEGKT. Residues 787–806 show a composition bias toward basic and acidic residues; sequence QEVAKGEAVHPKEDGEEPKR. The disordered stretch occupies residues 787 to 811; the sequence is QEVAKGEAVHPKEDGEEPKRKPVRK. Residues C821, C823, C832, and C833 each coordinate Zn(2+).

The protein belongs to the SecA family. Monomer and homodimer. Part of the essential Sec protein translocation apparatus which comprises SecA, SecYEG and auxiliary proteins SecDF. Other proteins may also be involved. Zn(2+) is required as a cofactor.

It is found in the cell membrane. It localises to the cytoplasm. It carries out the reaction ATP + H2O + cellular proteinSide 1 = ADP + phosphate + cellular proteinSide 2.. Its function is as follows. Part of the Sec protein translocase complex. Interacts with the SecYEG preprotein conducting channel. Has a central role in coupling the hydrolysis of ATP to the transfer of proteins into and across the cell membrane, serving as an ATP-driven molecular motor driving the stepwise translocation of polypeptide chains across the membrane. The polypeptide is Protein translocase subunit SecA 1 (Geobacillus kaustophilus (strain HTA426)).